A 457-amino-acid polypeptide reads, in one-letter code: 11S globulin seed storage protein Ana o 2.0101 (457 aa).

A signal peptide spans 1-14; it reads LSVCFLILFHGCLA. The interval 15-29 is igE-binding; that stretch reads SRQEWQQQDECQIDR. Intrachain disulfides connect C25–C58 and C101–C278. 2 conformational epitope; mouse monoclonal antibody (mAb) 2B5-binding regions span residues 29–37 and 31–48; these read RLDALEPDN and DALE…TVEA. A Cupin type-1 1 domain is found at 30–220; that stretch reads LDALEPDNRV…AFQVDERLIK (191 aa). Binds goat polyclonal antibodies (pAbs) stretches follow at residues 32 to 45 and 55 to 86; these read ALEP…EAGT and QFRC…QLIY. The tract at residues 34-57 is mouse monoclonal antibody (mAb) 2B5-binding; the sequence is EPDNRVEYEAGTVEAWDPNHEQFR. The interval 41–55 is mouse monoclonal antibody (mAb) 4H9-binding; it reads YEAGTVEAWDPNHEQ. Positions 105–119 are igE-binding; sequence YQAPQQGRQQGQSGR. Positions 215–239 are binds goat polyclonal antibodies (pAbs); that stretch reads DERLIKQLKSEDNRGGIVKVKDDEL. Residues 233 to 252 are CD4(+) T cell-reactive epitope; that stretch reads KVKDDELRVIRPSRSQSERG. A disordered region spans residues 243-270; that stretch reads RPSRSQSERGSESEEESEDEKRRWGQRD. The segment covering 261 to 270 has biased composition (basic and acidic residues); it reads DEKRRWGQRD. The interval 265–289 is linear epitope; mouse monoclonal antibody (mAb) 1F5-binding; it reads RWGQRDNGIEETICTMRLKENINDP. The NGXEET; peptidase recognition motif motif lies at 271–276; sequence NGIEET. A Cupin type-1 2 domain is found at 284–433; sequence ENINDPARAD…AFQISREDAR (150 aa). 5 CD4(+) T cell-reactive epitope regions span residues 289–308, 297–316, 321–340, 329–348, and 377–396; these read PARA…LNSL, PEVG…LKWL, EKGV…LNSH, ALVL…GCKG, and QNFA…ISFK. The interval 395–416 is binds goat polyclonal antibodies (pAbs), but buried in the 3D-structure model; that stretch reads FKTNDRAMTSPLAGRTSVLGGM.

The protein belongs to the 11S seed storage protein (globulins) family. Homotrimer. Hexamer. Each subunit is composed of an acidic and a basic chain derived from a single precursor and linked by a disulfide bond. In terms of processing, proteolytically processed from a single precursor to produce an acidic and a basic chain that are linked by a disulfide bond. Not glycosylated. As to expression, expressed in seed (at protein level). Expressed in the juice of the cashew apple (at protein level).

Its function is as follows. Seed storage protein. In Anacardium occidentale (Cashew), this protein is 11S globulin seed storage protein Ana o 2.0101.